The primary structure comprises 122 residues: Histone H2B, gonadal (122 aa).

The interval 1 to 31 is disordered; it reads MPPKVSSKGAKKAGKAKAARSGDKKRKRRRK. Residues 9–31 are compositionally biased toward basic residues; sequence GAKKAGKAKAARSGDKKRKRRRK. An O-linked (GlcNAc) serine glycan is attached at Ser-109. Lys-117 is covalently cross-linked (Glycyl lysine isopeptide (Lys-Gly) (interchain with G-Cter in ubiquitin)).

Belongs to the histone H2B family. In terms of assembly, the nucleosome is a histone octamer containing two molecules each of H2A, H2B, H3 and H4 assembled in one H3-H4 heterotetramer and two H2A-H2B heterodimers. The octamer wraps approximately 147 bp of DNA. Monoubiquitination of Lys-117 gives a specific tag for epigenetic transcriptional activation and is also prerequisite for histone H3 'Lys-4' and 'Lys-79' methylation. In terms of processing, glcNAcylation at Ser-109 promotes monoubiquitination of Lys-117. It fluctuates in response to extracellular glucose, and associates with transcribed genes.

The protein localises to the nucleus. The protein resides in the chromosome. Functionally, core component of nucleosome. Nucleosomes wrap and compact DNA into chromatin, limiting DNA accessibility to the cellular machineries which require DNA as a template. Histones thereby play a central role in transcription regulation, DNA repair, DNA replication and chromosomal stability. DNA accessibility is regulated via a complex set of post-translational modifications of histones, also called histone code, and nucleosome remodeling. In Patella granatina (Sandpaper limpet), this protein is Histone H2B, gonadal.